The sequence spans 748 residues: Translation factor GUF1 homolog 2, mitochondrial (748 aa).

The transit peptide at 1 to 29 directs the protein to the mitochondrion; it reads MRVGCCLLLKPLRQRLCTASISSRHIMRW. The region spanning 94–276 is the tr-type G domain; sequence SHIRNVAVVA…AIIERVPPPT (183 aa). GTP is bound by residues 103–110, 167–171, and 221–224; these read AHVDHGKT, DTPGH, and TKMD.

The protein belongs to the TRAFAC class translation factor GTPase superfamily. Classic translation factor GTPase family. LepA subfamily.

The protein localises to the mitochondrion inner membrane. The catalysed reaction is GTP + H2O = GDP + phosphate + H(+). Promotes mitochondrial protein synthesis. May act as a fidelity factor of the translation reaction, by catalyzing a one-codon backward translocation of tRNAs on improperly translocated ribosomes. Binds to mitochondrial ribosomes in a GTP-dependent manner. The chain is Translation factor GUF1 homolog 2, mitochondrial from Trypanosoma cruzi (strain CL Brener).